An 827-amino-acid chain; its full sequence is Villin-1 (827 aa).

The segment at 1-126 is necessary for homodimerization; sequence MTKLNAQVKG…IRKGGVASGM (126 aa). The core stretch occupies residues 1–734; the sequence is MTKLNAQVKG…YDDLKAELGN (734 aa). The stretch at 27–76 is one Gelsolin-like 1 repeat; sequence MQMVPVPSSTFGSFFDGDCYVVLAIHKTSSTLSYDIHYWIGQDSSQDEQG. 2 LPA/PIP2-binding site regions span residues 112–119 and 138–146; these read KQGLVIRK and RLLHVKGKR. 2 Gelsolin-like repeats span residues 148 to 188 and 265 to 309; these read VLAG…MERL and LVVR…QERS. Ser366 is modified (phosphoserine). 3 Gelsolin-like repeats span residues 407–457, 528–568, and 631–672; these read DLEL…DEIA, TKAF…DERE, and FLAT…EEKK. Ser735 and Ser776 each carry phosphoserine. The interval 735-827 is headpiece; that stretch reads SGDWSQIADE…QNIKKEKGLF (93 aa). The 67-residue stretch at 761–827 folds into the HP domain; the sequence is SGPLPTFPLE…QNIKKEKGLF (67 aa). Positions 816-824 are LPA/PIP2-binding site 3; sequence KQQNIKKEK.

Belongs to the villin/gelsolin family. In terms of assembly, monomer. Homodimer; homodimerization is necessary for actin-bundling. Associates with F-actin; phosphorylation at tyrosine residues decreases the association with F-actin. Interacts (phosphorylated at C-terminus tyrosine phosphorylation sites) with PLCG1 (via the SH2 domains). Interacts (phosphorylated form) with PLCG1; the interaction is enhanced by hepatocyte growth factor (HGF). Phosphorylated on tyrosine residues by SRC. The unphosphorylated form increases the initial rate of actin-nucleating activity, whereas the tyrosine phosphorylated form inhibits actin-nucleating activity, enhances actin-bundling activity and enhances actin-severing activity by reducing high Ca(2+) requirements. The tyrosine phosphorylated form does not regulate actin-capping activity. Tyrosine phosphorylation is essential for cell migration: tyrosine phosphorylation sites in the N-terminus half regulate actin reorganization and cell morphology, whereas tyrosine phosphorylation sites in the C-terminus half regulate cell migration via interaction with PLCG1. Tyrosine phosphorylation is induced by epidermal growth factor (EGF) and stimulates cell migration. Expressed in small intestin, colon, kidney and enterocytes (at protein level).

The protein localises to the cytoplasm. It localises to the cytoskeleton. The protein resides in the cell projection. Its subcellular location is the microvillus. It is found in the lamellipodium. The protein localises to the ruffle. It localises to the filopodium tip. The protein resides in the filopodium. Functionally, epithelial cell-specific Ca(2+)-regulated actin-modifying protein that modulates the reorganization of microvillar actin filaments. Plays a role in the actin nucleation, actin filament bundle assembly, actin filament capping and severing. Binds phosphatidylinositol 4,5-bisphosphate (PIP2) and lysophosphatidic acid (LPA); binds LPA with higher affinity than PIP2. Binding to LPA increases its phosphorylation by SRC and inhibits all actin-modifying activities. Binding to PIP2 inhibits actin-capping and -severing activities but enhances actin-bundling activity. Regulates the intestinal epithelial cell morphology, cell invasion, cell migration and apoptosis. Protects against apoptosis induced by dextran sodium sulfate (DSS) in the gastrointestinal epithelium. Appears to regulate cell death by maintaining mitochondrial integrity. Enhances hepatocyte growth factor (HGF)-induced epithelial cell motility, chemotaxis and wound repair. Upon S.flexneri cell infection, its actin-severing activity enhances actin-based motility of the bacteria and plays a role during the dissemination. This Mus musculus (Mouse) protein is Villin-1 (Vil1).